Consider the following 351-residue polypeptide: Anaerobic nitrite reductase Glb1-2 (351 aa).

Globin domains follow at residues 13 to 162 and 184 to 333; these read DFTE…VEMK and CFTE…AEMK. Residues S56, K70, H74, K104, T108, H109, S227, K241, H245, K275, T279, and H280 each contribute to the heme b site. Residues 331 to 351 are disordered; it reads EMKKTDHDHQTNVEDKSKPSS.

Belongs to the plant globin family. As to quaternary structure, monomer. It depends on heme b as a cofactor. In terms of tissue distribution, predominantly expressed in nodules and roots, and, to a lesser extent, in leaves, at low levels in pods, but barely in stems, petioles, buds and flowers. As to expression, mainly expressed in nodules and roots at low levels, and barely in leaves. Expressed at very low levels in nodules, roots and pods.

It localises to the cytoplasm. Its subcellular location is the nucleus. It carries out the reaction Fe(III)-heme b-[protein] + nitric oxide + H2O = Fe(II)-heme b-[protein] + nitrite + 2 H(+). Functionally, phytoglobin that regulates the fine tuning of nitric oxide (NO) concentration in the cytosol in response to sudden changes in O(2) availability, and performs both symbiotic and nonsymbiotic functions. Exhibits NO dioxygenase activity in the presence of O(2) but nitrite reductase (NiR) activity in the absence of O(2) (e.g. during flooding or in waterlogged soil). May not function as an oxygen storage or transport protein. Extremely reactive toward the physiological ligands O(2), nitric oxide (NO), and nitrite with a very high affinity for O(2) through an hexacoordinate heme iron because of a very low dissociation constant. Its function is as follows. Very high affinity for O(2) through two hexacoordinate heme irons. Extremely reactive toward the physiological ligands O(2), nitric oxide (NO), and nitrite. Very high affinity for O(2) through a single hexacoordinate heme iron. Extremely reactive toward the physiological ligands O(2), nitric oxide (NO), and nitrite. The sequence is that of Anaerobic nitrite reductase Glb1-2 from Medicago truncatula (Barrel medic).